The chain runs to 263 residues: Meiotic drive suppressor wtf6 (263 aa).

The segment at 1–68 (MKNNYTSLKS…REKNPSRSTD (68 aa)) is disordered. The segment covering 19–30 (KTDHEIDLEKGP) has biased composition (basic and acidic residues). A run of 3 helical transmembrane segments spans residues 73 to 93 (FLIK…PAVC), 110 to 130 (WTLF…LTYF), and 201 to 221 (SASA…AETV).

Belongs to the WTF family. Homomer. Interacts with other proteins that exhibit high sequence similarity.

It is found in the spore membrane. Its subcellular location is the vacuole membrane. In terms of biological role, acts as a suppressor component of the dual wtf meiotic drive system, and can suppress but not confer meiotic drive by compatible poisons. Wtf meiotic drive systems promote unequal transmission of alleles from the parental zygote to progeny spores by encoding a poison and an antidote from the same locus; the poison is trans-acting and forms toxic aggregates in all spores within an ascus, wherease the antidote is spore-specific and targets aggregates for degradation by the vacuole. Meiotic drive by wtf systems therefore lead to poisoning of all progeny that do not inherit the dual poison/antidote allele, or express a compatible antidote. The polypeptide is Meiotic drive suppressor wtf6 (Schizosaccharomyces kambucha (Fission yeast)).